The primary structure comprises 388 residues: Homeobox protein XHOX-3 (388 aa).

Disordered stretches follow at residues 30–109 (AVGS…SDFY) and 131–163 (SAGQCSEPMGGSPVNGSDSSKGGGGSHGSFSAC). Polar residues-rich tracts occupy residues 68-81 (ATGQQRSRSPQLRI) and 91-103 (DSLSTKGQHSSSD). Positions 168–227 (MRRYRTAFTREQIARLEKEFYRENYVSRPRRCELAAALNLPETTIKVWFQNRRMKDKRQR) form a DNA-binding region, homeobox.

This sequence belongs to the even-skipped homeobox family.

It localises to the nucleus. In terms of biological role, may be required for posterior development and development of normal embryonic axial pattern. This is Homeobox protein XHOX-3 (xhox3) from Xenopus laevis (African clawed frog).